The following is a 145-amino-acid chain: MDIRQMNKTHLEHWRGLRKQLWPGHPDDAHLADGEEILQADHLASFIAMADGVAIGFADASIRHDYVNGCDSSPVVFLEGIFVLPSFRQRGVAKQLIAAVQRWGTNKGCREMASDTSPENTISQKVHQALGFEETERVIFYRKRC.

Residues 1–145 (MDIRQMNKTH…ERVIFYRKRC (145 aa)) form the N-acetyltransferase domain. W22, H25, Y66, and E79 together coordinate substrate. Residues 81-83 (IFV) and 89-94 (QRGVAK) contribute to the acetyl-CoA site. D115 serves as a coordination point for substrate. N120 is a binding site for acetyl-CoA. Residue E136 participates in substrate binding.

Homodimer.

It carries out the reaction kanamycin B + acetyl-CoA = N(6')-acetylkanamycin B + CoA + H(+). In terms of biological role, catalyzes the transfer of an acetyl group from acetyl-CoA to the 6'-amino group of aminoglycoside molecules conferring resistance to antibiotics containing the purpurosamine ring including amikacin, tobramycin, dibekacin and ribostamycin. Able to acetylate eukaryotic histone proteins. The polypeptide is Aminoglycoside N(6')-acetyltransferase type 1 (Salmonella enteritidis).